Consider the following 165-residue polypeptide: uncharacterized protein (165 aa).

Residues 16–36 (ASISSILNFFFFYIMEYFVAV) traverse the membrane as a helical segment.

Belongs to the asfivirus F165R family.

The protein localises to the host membrane. This is an uncharacterized protein from African swine fever virus (strain Badajoz 1971 Vero-adapted) (Ba71V).